A 210-amino-acid polypeptide reads, in one-letter code: Peroxiredoxin-5, mitochondrial (210 aa).

The transit peptide at 1–48 (MLQLGLRVLGCKASSVLRASTCLAGRAGRKEAGWECGGARSFSSSAVT) directs the protein to the mitochondrion. Positions 52–210 (IKVGDAIPSV…SLAPNILSQL (159 aa)) constitute a Thioredoxin domain. Lysine 70 bears the N6-acetyllysine; alternate mark. The residue at position 70 (lysine 70) is an N6-succinyllysine; alternate. Lysine 71 carries the N6-acetyllysine modification. Residue lysine 79 is modified to N6-acetyllysine; alternate. Lysine 79 bears the N6-succinyllysine; alternate mark. The active-site Cysteine sulfenic acid (-SOH) intermediate is cysteine 96. Cysteine 96 carries the S-palmitoyl cysteine lipid modification. Residues cysteine 96 and cysteine 200 are joined by a disulfide bond. Lysine 112 is subject to N6-succinyllysine. Serine 167 and serine 178 each carry phosphoserine. The short motif at 208–210 (SQL) is the Microbody targeting signal element.

Belongs to the peroxiredoxin family. Prx5 subfamily. In terms of assembly, monomer. S-palmitoylated. Palmitoylation occurs on the active site, inhibiting its reactivity; therefore PRDX5 palmitoylation status determines its antioxidant capacity. In terms of processing, S-palmitoylated. Depalmitoylated by ABHD10. As to expression, widely expressed.

It localises to the mitochondrion. The protein resides in the cytoplasm. It is found in the peroxisome matrix. It carries out the reaction a hydroperoxide + [thioredoxin]-dithiol = an alcohol + [thioredoxin]-disulfide + H2O. In terms of biological role, thiol-specific peroxidase that catalyzes the reduction of hydrogen peroxide and organic hydroperoxides to water and alcohols, respectively. Plays a role in cell protection against oxidative stress by detoxifying peroxides and as sensor of hydrogen peroxide-mediated signaling events. The chain is Peroxiredoxin-5, mitochondrial from Mus musculus (Mouse).